A 279-amino-acid polypeptide reads, in one-letter code: MKIENKEITSNWFTNLRDLLCKEFEKIEEEYAQTKCLKPAKFVRTSWQRNGGGGGIMSLMKGEVFEKVGVNISTVFGEFSPEFRSEIPGAELDGKFSATGISLVAHLKSPLIPAMHFNTRYIETSKSWFGGGGDLTPFYPEENETEKFHAAFKEACDKYDSGYYPKFKKQCDEYFYLKHRKEPRGVGGIFYDYLNSGNFEQDFSFTQDVGMALLSVYPEIVRSKLFLPWTAEQKEYQLIRRGRYVEFNLLYDRGTKFGLMTDGNVEAILMSLPPEVKFN.

S102 lines the substrate pocket. H106 and H116 together coordinate a divalent metal cation. H116 acts as the Proton donor in catalysis. Substrate is bound at residue 118-120 (NTR). Residues H149 and H179 each contribute to the a divalent metal cation site. The tract at residues 244–279 (YVEFNLLYDRGTKFGLMTDGNVEAILMSLPPEVKFN) is important for dimerization.

Belongs to the aerobic coproporphyrinogen-III oxidase family. Homodimer. Requires a divalent metal cation as cofactor.

The protein resides in the cytoplasm. It catalyses the reaction coproporphyrinogen III + O2 + 2 H(+) = protoporphyrinogen IX + 2 CO2 + 2 H2O. Its pathway is porphyrin-containing compound metabolism; protoporphyrin-IX biosynthesis; protoporphyrinogen-IX from coproporphyrinogen-III (O2 route): step 1/1. Functionally, involved in the heme biosynthesis. Catalyzes the aerobic oxidative decarboxylation of propionate groups of rings A and B of coproporphyrinogen-III to yield the vinyl groups in protoporphyrinogen-IX. This chain is Oxygen-dependent coproporphyrinogen-III oxidase, found in Rickettsia akari (strain Hartford).